The chain runs to 284 residues: MSRPDQAARRRAIAAELHVSPTFDARDEAERRIGFVADYLRTAGLRACVLGISGGIDSSTAGRLAQLAVERLRASGYDARFVAMRLPYGAQHDEADARRALAFVRADETLTVDVKPAADAMLAALAAGGLAYLDHAQQDFVLGNIKARERMIAQYAVAGARNGVVIGTDHAAESVMGFFTKFGDGGADVLPLAGLTKRRVRALARMLGADEPLVLKTPTADLETLRPQRPDEHAYGITYEQIDDFLEGKPMDDAVAETVLRFYDATHHKRALPYTMFDWPGHPA.

Residue 51 to 58 (GISGGIDS) coordinates ATP. Position 57 (D57) interacts with Mg(2+). R148 is a deamido-NAD(+) binding site. Position 168 (T168) interacts with ATP. E173 serves as a coordination point for Mg(2+). Residues K181 and D188 each coordinate deamido-NAD(+). ATP contacts are provided by K197 and T219. 268–269 (HK) is a deamido-NAD(+) binding site.

It belongs to the NAD synthetase family. Homodimer.

The enzyme catalyses deamido-NAD(+) + NH4(+) + ATP = AMP + diphosphate + NAD(+) + H(+). The protein operates within cofactor biosynthesis; NAD(+) biosynthesis; NAD(+) from deamido-NAD(+) (ammonia route): step 1/1. Its function is as follows. Catalyzes the ATP-dependent amidation of deamido-NAD to form NAD. Uses ammonia as a nitrogen source. This Burkholderia mallei (strain NCTC 10247) protein is NH(3)-dependent NAD(+) synthetase.